We begin with the raw amino-acid sequence, 339 residues long: Ketol-acid reductoisomerase (NADP(+)) (339 aa).

The KARI N-terminal Rossmann domain maps to 1–182 (MRVYYDRDAD…GGGRAGIIET (182 aa)). NADP(+)-binding positions include 24–27 (YGSQ), Arg48, Ser51, Thr53, and 83–86 (DELQ). Residue His108 is part of the active site. Gly134 is an NADP(+) binding site. The 146-residue stretch at 183–328 (TFKEECETDL…AKLRGMMPWI (146 aa)) folds into the KARI C-terminal knotted domain. Residues Asp191, Glu195, Glu227, and Glu231 each contribute to the Mg(2+) site. Ser252 contacts substrate.

It belongs to the ketol-acid reductoisomerase family. Mg(2+) serves as cofactor.

It carries out the reaction (2R)-2,3-dihydroxy-3-methylbutanoate + NADP(+) = (2S)-2-acetolactate + NADPH + H(+). It catalyses the reaction (2R,3R)-2,3-dihydroxy-3-methylpentanoate + NADP(+) = (S)-2-ethyl-2-hydroxy-3-oxobutanoate + NADPH + H(+). It participates in amino-acid biosynthesis; L-isoleucine biosynthesis; L-isoleucine from 2-oxobutanoate: step 2/4. The protein operates within amino-acid biosynthesis; L-valine biosynthesis; L-valine from pyruvate: step 2/4. In terms of biological role, involved in the biosynthesis of branched-chain amino acids (BCAA). Catalyzes an alkyl-migration followed by a ketol-acid reduction of (S)-2-acetolactate (S2AL) to yield (R)-2,3-dihydroxy-isovalerate. In the isomerase reaction, S2AL is rearranged via a Mg-dependent methyl migration to produce 3-hydroxy-3-methyl-2-ketobutyrate (HMKB). In the reductase reaction, this 2-ketoacid undergoes a metal-dependent reduction by NADPH to yield (R)-2,3-dihydroxy-isovalerate. The sequence is that of Ketol-acid reductoisomerase (NADP(+)) from Methylorubrum extorquens (strain CM4 / NCIMB 13688) (Methylobacterium extorquens).